The following is a 173-amino-acid chain: Translation initiation factor IF-3 (173 aa).

It belongs to the IF-3 family. As to quaternary structure, monomer.

The protein localises to the cytoplasm. Functionally, IF-3 binds to the 30S ribosomal subunit and shifts the equilibrium between 70S ribosomes and their 50S and 30S subunits in favor of the free subunits, thus enhancing the availability of 30S subunits on which protein synthesis initiation begins. The chain is Translation initiation factor IF-3 from Caulobacter vibrioides (strain ATCC 19089 / CIP 103742 / CB 15) (Caulobacter crescentus).